Reading from the N-terminus, the 229-residue chain is Cytochrome c oxidase assembly factor 7 (229 aa).

Sel1-like repeat units lie at residues 34-66 (PEGCHRLADYLEGVKKNYESTAQVLQHNCEVNA), 68-104 (AQSCYKLGAYHVTGKGGMKKCLKTAYSCFLKSCNTQG), 108-145 (VDACHNVGLLAQDGRALETGPDTTVARQYFEKACEGGF), 146-182 (APSCFNLSTLYIQGFPGLDKSMPLALKYALKACDLGH), and 183-218 (VWGCANASRMYKLGDGTDKDEQRAEELKNRAKDLHG). The segment at 197 to 229 (DGTDKDEQRAEELKNRAKDLHGQEKERQLKFGE) is disordered.

This sequence belongs to the hcp beta-lactamase family.

Its subcellular location is the mitochondrion intermembrane space. May be required for assembly of mitochondrial respiratory chain complexes. This Danio rerio (Zebrafish) protein is Cytochrome c oxidase assembly factor 7 (coa7).